The chain runs to 539 residues: Oviduct-specific glycoprotein (539 aa).

Residues 1-21 form the signal peptide; the sequence is MGKLLLWVGLLLMLKHHDGAA. The 364-residue stretch at 22–385 folds into the GH18 domain; the sequence is HKLVCYFTNW…HTLNNLLVND (364 aa). Cysteine 26 and cysteine 51 are disulfide-bonded. Chitin is bound by residues 71-72, 98-101, tyrosine 142, 211-214, and tryptophan 355; these read PL, GGWN, and LSYD. N-linked (GlcNAc...) asparagine glycosylation is present at asparagine 402. Disordered stretches follow at residues 433–480 and 503–539; these read TETH…KPLT and QKVT…LERL. Over residues 440–457 the composition is skewed to low complexity; sequence ATMTTTPRGETATPTRTP.

This sequence belongs to the glycosyl hydrolase 18 family. Oviduct.

It is found in the cytoplasmic vesicle. It localises to the secretory vesicle. Binds to oocyte zona pellucida in vivo. May play a role in the fertilization process and/or early embryonic development. In Ovis aries (Sheep), this protein is Oviduct-specific glycoprotein (OVGP1).